Reading from the N-terminus, the 479-residue chain is Sulfate adenylyltransferase subunit 1 (479 aa).

The tr-type G domain occupies 25–239 (KSLLRFLTCG…EVLETVDIQR (215 aa)). The interval 34 to 41 (GSVDDGKS) is G1. 34 to 41 (GSVDDGKS) provides a ligand contact to GTP. Residues 92–96 (GITID) form a G2 region. A G3 region spans residues 113–116 (DTPG). Residues 113-117 (DTPGH) and 168-171 (NKMD) contribute to the GTP site. The G4 stretch occupies residues 168-171 (NKMD). Residues 206–208 (SAL) are G5.

It belongs to the TRAFAC class translation factor GTPase superfamily. Classic translation factor GTPase family. CysN/NodQ subfamily. As to quaternary structure, heterodimer composed of CysD, the smaller subunit, and CysN.

It catalyses the reaction sulfate + ATP + H(+) = adenosine 5'-phosphosulfate + diphosphate. The protein operates within sulfur metabolism; hydrogen sulfide biosynthesis; sulfite from sulfate: step 1/3. With CysD forms the ATP sulfurylase (ATPS) that catalyzes the adenylation of sulfate producing adenosine 5'-phosphosulfate (APS) and diphosphate, the first enzymatic step in sulfur assimilation pathway. APS synthesis involves the formation of a high-energy phosphoric-sulfuric acid anhydride bond driven by GTP hydrolysis by CysN coupled to ATP hydrolysis by CysD. The sequence is that of Sulfate adenylyltransferase subunit 1 from Salmonella paratyphi A (strain ATCC 9150 / SARB42).